A 226-amino-acid chain; its full sequence is UPF0758 protein M28_Spy0816 (226 aa).

An MPN domain is found at 103-225 (SVLTSVQVAE…YYSFREKSTL (123 aa)). Positions 174, 176, and 187 each coordinate Zn(2+). The short motif at 174 to 187 (HNHPSGNIEPSSND) is the JAMM motif element.

It belongs to the UPF0758 family.

This is UPF0758 protein M28_Spy0816 from Streptococcus pyogenes serotype M28 (strain MGAS6180).